We begin with the raw amino-acid sequence, 439 residues long: Proline--tRNA ligase (439 aa).

Belongs to the class-II aminoacyl-tRNA synthetase family. ProS type 2 subfamily. In terms of assembly, homodimer.

The protein resides in the cytoplasm. The catalysed reaction is tRNA(Pro) + L-proline + ATP = L-prolyl-tRNA(Pro) + AMP + diphosphate. In terms of biological role, catalyzes the attachment of proline to tRNA(Pro) in a two-step reaction: proline is first activated by ATP to form Pro-AMP and then transferred to the acceptor end of tRNA(Pro). This chain is Proline--tRNA ligase, found in Phenylobacterium zucineum (strain HLK1).